The sequence spans 374 residues: Peptide chain release factor 2 (374 aa).

Position 252 is an N5-methylglutamine (Gln-252).

The protein belongs to the prokaryotic/mitochondrial release factor family. Post-translationally, methylated by PrmC. Methylation increases the termination efficiency of RF2.

Its subcellular location is the cytoplasm. Functionally, peptide chain release factor 2 directs the termination of translation in response to the peptide chain termination codons UGA and UAA. The chain is Peptide chain release factor 2 from Xanthomonas euvesicatoria pv. vesicatoria (strain 85-10) (Xanthomonas campestris pv. vesicatoria).